Here is a 158-residue protein sequence, read N- to C-terminus: Large ribosomal subunit protein mL50 (158 aa).

It belongs to the mitochondrion-specific ribosomal protein mL50 family. Component of the mitochondrial ribosome large subunit (39S) which comprises a 16S rRNA and about 50 distinct proteins.

It is found in the mitochondrion. The sequence is that of Large ribosomal subunit protein mL50 (MRPL50) from Pongo abelii (Sumatran orangutan).